A 236-amino-acid polypeptide reads, in one-letter code: (5-formylfuran-3-yl)methyl phosphate synthase (236 aa).

The active-site Schiff-base intermediate with substrate is the K27. K85 acts as the Proton acceptor in catalysis.

The protein belongs to the MfnB family.

It carries out the reaction 2 D-glyceraldehyde 3-phosphate = 4-(hydroxymethyl)-2-furancarboxaldehyde phosphate + phosphate + 2 H2O. It participates in cofactor biosynthesis; methanofuran biosynthesis. Catalyzes the formation of 4-(hydroxymethyl)-2-furancarboxaldehyde phosphate (4-HFC-P) from two molecules of glyceraldehyde-3-P (GA-3-P). This is (5-formylfuran-3-yl)methyl phosphate synthase from Methanococcus maripaludis (strain C6 / ATCC BAA-1332).